The chain runs to 134 residues: Putative toxin MJ0605 (134 aa).

The protein belongs to the UPF0332 family.

Functionally, putative toxin component of a putative type VII toxin-antitoxin (TA) system. Its cognate antitoxin might be MJ0604. The sequence is that of Putative toxin MJ0605 from Methanocaldococcus jannaschii (strain ATCC 43067 / DSM 2661 / JAL-1 / JCM 10045 / NBRC 100440) (Methanococcus jannaschii).